Consider the following 187-residue polypeptide: Elongation factor P (187 aa).

This sequence belongs to the elongation factor P family.

It is found in the cytoplasm. The protein operates within protein biosynthesis; polypeptide chain elongation. In terms of biological role, involved in peptide bond synthesis. Stimulates efficient translation and peptide-bond synthesis on native or reconstituted 70S ribosomes in vitro. Probably functions indirectly by altering the affinity of the ribosome for aminoacyl-tRNA, thus increasing their reactivity as acceptors for peptidyl transferase. This chain is Elongation factor P, found in Erythrobacter litoralis (strain HTCC2594).